Consider the following 175-residue polypeptide: Diacylglycerol kinase (175 aa).

Helical transmembrane passes span 55-75 (VAPN…YAFA) and 96-116 (LLHL…LVMI). Glu118 acts as the Proton acceptor in catalysis. Glu125 lines the a divalent metal cation pocket. The helical transmembrane segment at 151 to 171 (VLLAAIAAVIVGGCLLLPPLL) threads the bilayer.

Belongs to the bacterial diacylglycerol kinase family. Requires Mg(2+) as cofactor.

It localises to the cell membrane. It carries out the reaction a 1,2-diacyl-sn-glycerol + ATP = a 1,2-diacyl-sn-glycero-3-phosphate + ADP + H(+). Its function is as follows. Catalyzes the ATP-dependent phosphorylation of sn-l,2-diacylglycerol (DAG) to phosphatidic acid. The polypeptide is Diacylglycerol kinase (dgkA) (Synechocystis sp. (strain ATCC 27184 / PCC 6803 / Kazusa)).